Here is a 180-residue protein sequence, read N- to C-terminus: MKGGKRVQTARPNRINSEIRAQEVRLTGLEGEQLGIVSLREALEKTEEAGVDLVEISPNAEPPVCRIMDYGKFLYEKSKSSKEQKKKQKVIQVKEIKFRPGTDEGDYQVKLRSLIRFLEEGDKAKITLRFRGREMAHQQIGMEVLNRVKDDLQELAVVESFPTKIEGRQMIMVLAPKKKQ.

The protein belongs to the IF-3 family. In terms of assembly, monomer.

The protein resides in the cytoplasm. Functionally, IF-3 binds to the 30S ribosomal subunit and shifts the equilibrium between 70S ribosomes and their 50S and 30S subunits in favor of the free subunits, thus enhancing the availability of 30S subunits on which protein synthesis initiation begins. This Salmonella paratyphi A (strain ATCC 9150 / SARB42) protein is Translation initiation factor IF-3.